A 401-amino-acid chain; its full sequence is Propionate kinase (401 aa).

ATP is bound by residues Asn-11 and Lys-18. Asn-11 contributes to the Mg(2+) binding site. Arg-86 is a binding site for substrate. Residue Asp-143 is the Proton donor/acceptor of the active site. ATP contacts are provided by residues His-175, 203–207 (HLGNG), 278–280 (DLR), and 326–330 (GIGEN).

Belongs to the acetokinase family. TdcD subfamily. Homodimer. Mg(2+) is required as a cofactor.

The catalysed reaction is propanoate + ATP = propanoyl phosphate + ADP. It participates in amino-acid degradation; L-threonine degradation via propanoate pathway; propanoate from L-threonine: step 4/4. Its function is as follows. Catalyzes the conversion of propionyl phosphate and ADP to propionate and ATP. This is Propionate kinase from Klebsiella pneumoniae (strain 342).